The sequence spans 459 residues: Glycosyl hydrolase family 109 protein (459 aa).

Residues 1 to 31 constitute a signal peptide (tat-type signal); it reads MHNIHRRNFLKAAGAATAGLVTANIALNAYA. Residues 64–65, aspartate 86, 135–138, 155–156, and asparagine 184 each bind NAD(+); these read ER, WEWH, and EV. Substrate contacts are provided by residues tyrosine 213, arginine 232, 244 to 247, and tyrosine 326; that span reads YPTH. Tyrosine 244 is an NAD(+) binding site.

It belongs to the Gfo/Idh/MocA family. Glycosyl hydrolase 109 subfamily. Requires NAD(+) as cofactor. In terms of processing, predicted to be exported by the Tat system. The position of the signal peptide cleavage has not been experimentally proven.

Its function is as follows. Glycosidase. The polypeptide is Glycosyl hydrolase family 109 protein (Shewanella baltica (strain OS155 / ATCC BAA-1091)).